The following is a 441-amino-acid chain: Probable cyclic di-GMP phosphodiesterase VC_1348 (441 aa).

The Response regulatory domain occupies 72–187 (TILIVDDSPD…LLKSRVHTHL (116 aa)). Residue Asp120 is modified to 4-aspartylphosphate. One can recognise an HD-GYP domain in the interval 214-425 (LDRMQDAVVF…FIDIAQKFAD (212 aa)).

The catalysed reaction is 3',3'-c-di-GMP + 2 H2O = 2 GMP + 2 H(+). Its function is as follows. Probable phosphodiesterase (PDE) that catalyzes the hydrolysis of cyclic diguanylate (c-di-GMP). Increases motility and decreases biofilm formation in vivo. The polypeptide is Probable cyclic di-GMP phosphodiesterase VC_1348 (Vibrio cholerae serotype O1 (strain ATCC 39315 / El Tor Inaba N16961)).